The following is a 148-amino-acid chain: Cuticle protein 8 (148 aa).

5 consecutive repeat copies span residues 16-19, Ala22, 28-31, 37-40, and 44-47. Residues 58–128 enclose the Chitin-binding type R&amp;R domain; the sequence is YPKYEFNYGV…RTPGTHPVAV (71 aa).

In terms of biological role, component of the cuticle of migratory locust which contains more than 100 different structural proteins. The protein is Cuticle protein 8 of Locusta migratoria (Migratory locust).